The chain runs to 158 residues: 2-C-methyl-D-erythritol 2,4-cyclodiphosphate synthase (158 aa).

2 residues coordinate a divalent metal cation: Asp9 and His11. Residues 9–11 (DVH) and 35–36 (HS) each bind 4-CDP-2-C-methyl-D-erythritol 2-phosphate. His43 serves as a coordination point for a divalent metal cation. Residues 57–59 (DIG), 62–66 (FPDTD), 101–107 (AQKPKMA), 133–136 (TTTE), Phe140, and Arg143 each bind 4-CDP-2-C-methyl-D-erythritol 2-phosphate.

Belongs to the IspF family. In terms of assembly, homotrimer. The cofactor is a divalent metal cation.

The catalysed reaction is 4-CDP-2-C-methyl-D-erythritol 2-phosphate = 2-C-methyl-D-erythritol 2,4-cyclic diphosphate + CMP. It participates in isoprenoid biosynthesis; isopentenyl diphosphate biosynthesis via DXP pathway; isopentenyl diphosphate from 1-deoxy-D-xylulose 5-phosphate: step 4/6. Functionally, involved in the biosynthesis of isopentenyl diphosphate (IPP) and dimethylallyl diphosphate (DMAPP), two major building blocks of isoprenoid compounds. Catalyzes the conversion of 4-diphosphocytidyl-2-C-methyl-D-erythritol 2-phosphate (CDP-ME2P) to 2-C-methyl-D-erythritol 2,4-cyclodiphosphate (ME-CPP) with a corresponding release of cytidine 5-monophosphate (CMP). In Bacillus velezensis (strain DSM 23117 / BGSC 10A6 / LMG 26770 / FZB42) (Bacillus amyloliquefaciens subsp. plantarum), this protein is 2-C-methyl-D-erythritol 2,4-cyclodiphosphate synthase.